Here is a 145-residue protein sequence, read N- to C-terminus: Arginine repressor (145 aa).

Belongs to the ArgR family.

It localises to the cytoplasm. Its pathway is amino-acid biosynthesis; L-arginine biosynthesis [regulation]. Regulates arginine biosynthesis genes. This Streptococcus mutans serotype c (strain ATCC 700610 / UA159) protein is Arginine repressor.